The primary structure comprises 578 residues: Poly(A) RNA polymerase cid13 (578 aa).

Mg(2+) contacts are provided by aspartate 110 and aspartate 112. The region spanning 275–330 (SLGILFVEFFRFFGYLFDYEHFVLSIRHGTFLSKRAKGWQFQLNNFLCVEEPFHTS) is the PAP-associated domain. Residues 495-565 (SHHFDERHGG…SEVVSPVSLH (71 aa)) form a disordered region. Residues 496-510 (HHFDERHGGDRHEKN) show a composition bias toward basic and acidic residues. Basic residues predominate over residues 516–527 (RYSRNKFHKKKQ). A compositionally biased stretch (low complexity) spans 547–565 (NSPPSNSSSSEVVSPVSLH).

This sequence belongs to the DNA polymerase type-B-like family. As to quaternary structure, interacts with pab1. It depends on Mg(2+) as a cofactor. Mn(2+) serves as cofactor.

The protein localises to the cytoplasm. Its subcellular location is the nucleus. The enzyme catalyses RNA(n) + ATP = RNA(n)-3'-adenine ribonucleotide + diphosphate. Polymerase that creates the 3' poly(A) tail of suc22 mRNA. The sequence is that of Poly(A) RNA polymerase cid13 (cid13) from Schizosaccharomyces pombe (strain 972 / ATCC 24843) (Fission yeast).